The chain runs to 341 residues: Glyceraldehyde-3-phosphate dehydrogenase 2 (341 aa).

Residues Arg-13 to Ile-14, Asp-35, and Arg-85 contribute to the NAD(+) site. Residues Ser-157–Thr-159, Thr-188, Thr-217–Gly-218, and Arg-240 contribute to the D-glyceraldehyde 3-phosphate site. The active-site Nucleophile is Cys-158. Asn-322 serves as a coordination point for NAD(+).

Belongs to the glyceraldehyde-3-phosphate dehydrogenase family. As to quaternary structure, homotetramer.

The protein resides in the cytoplasm. It catalyses the reaction D-glyceraldehyde 3-phosphate + phosphate + NAD(+) = (2R)-3-phospho-glyceroyl phosphate + NADH + H(+). The protein operates within carbohydrate degradation; glycolysis; pyruvate from D-glyceraldehyde 3-phosphate: step 1/5. The polypeptide is Glyceraldehyde-3-phosphate dehydrogenase 2 (gpd-2) (Caenorhabditis elegans).